The primary structure comprises 222 residues: Eukaryotic translation initiation factor 3 subunit K (222 aa).

The 163-residue stretch at 46-208 folds into the PCI domain; that stretch reads YDLEANLAVL…KIKTKNITEK (163 aa).

The protein belongs to the eIF-3 subunit K family. Component of the eukaryotic translation initiation factor 3 (eIF-3) complex. The eIF-3 complex interacts with pix.

It is found in the cytoplasm. Its function is as follows. Component of the eukaryotic translation initiation factor 3 (eIF-3) complex, which is involved in protein synthesis of a specialized repertoire of mRNAs and, together with other initiation factors, stimulates binding of mRNA and methionyl-tRNAi to the 40S ribosome. The eIF-3 complex specifically targets and initiates translation of a subset of mRNAs involved in cell proliferation. This is Eukaryotic translation initiation factor 3 subunit K from Drosophila yakuba (Fruit fly).